A 486-amino-acid chain; its full sequence is Serine/threonine-protein phosphatase 2A 56 kDa regulatory subunit alpha isoform (486 aa).

S2 is subject to N-acetylserine. The segment at 22-52 (DGFTRKSVRKAQRQKRSQGSSQFRSQGSQAE) is disordered. A compositionally biased stretch (basic residues) spans 27–37 (KSVRKAQRQKR). Residues 38–51 (SQGSSQFRSQGSQA) show a composition bias toward low complexity. Phosphoserine occurs at positions 41, 42, and 49.

It belongs to the phosphatase 2A regulatory subunit B56 family. PP2A consists of a common heterodimeric core enzyme, composed of a 36 kDa catalytic subunit (subunit C) and a 65 kDa constant regulatory subunit (PR65 or subunit A), that associates with a variety of regulatory subunits. Proteins that associate with the core dimer include three families of regulatory subunits B (the R2/B/PR55/B55, R3/B''/PR72/PR130/PR59 and R5/B'/B56 families), the 48 kDa variable regulatory subunit, viral proteins, and cell signaling molecules. Interacts with SGO1. In terms of tissue distribution, widely expressed with highest levels in thymus and ovary.

Its subcellular location is the cytoplasm. It localises to the nucleus. The protein localises to the chromosome. The protein resides in the centromere. Functionally, the B regulatory subunit might modulate substrate selectivity and catalytic activity, and might also direct the localization of the catalytic enzyme to a particular subcellular compartment. The chain is Serine/threonine-protein phosphatase 2A 56 kDa regulatory subunit alpha isoform (Ppp2r5a) from Mus musculus (Mouse).